A 159-amino-acid polypeptide reads, in one-letter code: Transcriptional repressor NrdR (159 aa).

The segment at 1 to 21 (MRCPKCQHNKSNVIDSRQAED) is disordered. A zinc finger spans residues 3-34 (CPKCQHNKSNVIDSRQAEDGNTIRRRRECDAC). The ATP-cone domain maps to 49–139 (LLVVKKDGTR…VYRSFKDVDE (91 aa)).

The protein belongs to the NrdR family. It depends on Zn(2+) as a cofactor.

Negatively regulates transcription of bacterial ribonucleotide reductase nrd genes and operons by binding to NrdR-boxes. This chain is Transcriptional repressor NrdR, found in Streptococcus thermophilus (strain CNRZ 1066).